The sequence spans 197 residues: ATP synthase protein MI25 (197 aa).

Residues 30 to 50 (ISIYNEEMIVARCFIGFLIFS) traverse the membrane as a helical segment.

This sequence belongs to the ATPase protein MI25 family. In terms of assembly, F-type ATPases have 2 components, CF(1) - the catalytic core - and CF(0) - the membrane proton channel. CF(1) has five subunits: alpha(3), beta(3), gamma(1), delta(1), epsilon(1). CF(0) has three main subunits: a, b and c.

The protein resides in the mitochondrion membrane. Its function is as follows. This is one of the chains of the nonenzymatic component (CF(0) subunit) of the mitochondrial ATPase complex. This Oryza sativa subsp. indica (Rice) protein is ATP synthase protein MI25.